Consider the following 209-residue polypeptide: VYMSGXGKPPDVTGGEAHVAGKTVTYTXNPGYIMIGGAXLTYETGSLGGLPDIDDGKSFYGLLGKVPNRVGNSVTYSSQHGYYLLGKKTLTRLNHVGLPGGKPSALDNGMATIVXRXAIYKGNHGFYLVLPAGYPGTPGTPGPRGGPGDPGMPGEPGVGFPGVPGFPGSNGRNGMNGGYPGPKGEDGDIGPMGGKGEPGDPGLPGEYGV.

The tract at residues 1-129 is nonhelical region; it reads VYMSGXGKPP…YKGNHGFYLV (129 aa). Residues 130–209 form a triple-helical region region; it reads LPAGYPGTPG…DPGLPGEYGV (80 aa). The interval 138 to 209 is disordered; the sequence is PGTPGPRGGP…DPGLPGEYGV (72 aa). A compositionally biased stretch (gly residues) spans 142-162; that stretch reads GPRGGPGDPGMPGEPGVGFPG.

Functionally, major component of the egg case wall which is secreted by the oviduct. The egg case combines mechanical strength and toughness with high permeability to small molecules and ions. The chain is Egg case collagen from Scyliorhinus canicula (Small-spotted catshark).